The chain runs to 560 residues: Membrane protein insertase YidC (560 aa).

Residues 7-27 traverse the membrane as a helical segment; that stretch reads ILIVALAIVSYVMVLKWNQDY. Residues 38-56 show a composition bias toward polar residues; that stretch reads ASSTTTSGLPDTATGNNAA. A disordered region spans residues 38-76; sequence ASSTTTSGLPDTATGNNAAASDDIPRAASDTSAPAETPV. Transmembrane regions (helical) follow at residues 367-387, 437-457, 468-488, and 515-535; these read IVGN…GIFF, LGGC…YWVL, FMLW…PIIM, and PIIF…YWVV.

The protein belongs to the OXA1/ALB3/YidC family. Type 1 subfamily. As to quaternary structure, interacts with the Sec translocase complex via SecD. Specifically interacts with transmembrane segments of nascent integral membrane proteins during membrane integration.

The protein localises to the cell inner membrane. In terms of biological role, required for the insertion and/or proper folding and/or complex formation of integral membrane proteins into the membrane. Involved in integration of membrane proteins that insert both dependently and independently of the Sec translocase complex, as well as at least some lipoproteins. Aids folding of multispanning membrane proteins. The sequence is that of Membrane protein insertase YidC from Pseudomonas fluorescens (strain Pf0-1).